A 343-amino-acid chain; its full sequence is MGSADERRFEVLRAIVADFIATKEPIGSKTLVERHNLGVSSATVRNDMAVLEAEGYITQPHTSSGRVPTEKGYREFVDRLDDVKPLSAAERRAIQNFLESGVDLDDVLRRAVRLLAQLTRQVAIVQYPTLSSSTVRHLEVIALTPARLLMVVITDSGRVDQRIVELGDVIDDHELSRLREMLGQALVGKKLSAASVAVADLAEQLRSPDGLGDAVGRSATVLLESLVEHSEERLLMGGTANLTRNAADFGGSLRSILEALEEQVVVLRLLAAQQEAGKVTVRIGYETAAEQMVGTSMVTTAYGTSDTVYGGMGVLGPTRMDYPGTIASVAAVAMYIGEVLGAR.

The protein belongs to the HrcA family.

Functionally, negative regulator of class I heat shock genes (grpE-dnaK-dnaJ and groELS operons). Prevents heat-shock induction of these operons. This Mycobacterium avium (strain 104) protein is Heat-inducible transcription repressor HrcA.